The chain runs to 647 residues: Probable cobalt/nickel-exporting P-type ATPase (647 aa).

A run of 5 helical transmembrane segments spans residues 33–53, 55–75, 94–114, 260–280, and 291–311; these read WAAA…LGAP, AVVW…PAWV, AAIG…IVIF, AGVV…GADL, and MIVA…LSAI. Catalysis depends on Asp339, which acts as the 4-aspartylphosphate intermediate. Mg(2+) contacts are provided by Asp532 and Asp536. Residues 587 to 607 traverse the membrane as a helical segment; that stretch reads VIANLVMAGAAITTLVLWDLF.

It belongs to the cation transport ATPase (P-type) (TC 3.A.3) family. Type IB subfamily.

It is found in the cell membrane. It catalyses the reaction Ni(2+)(out) + ATP + H2O = Ni(2+)(in) + ADP + phosphate + H(+). The catalysed reaction is Co(2+)(out) + ATP + H2O = Co(2+)(in) + ADP + phosphate + H(+). In terms of biological role, involved in heavy metal homeostasis. Probably exports nickel and cobalt ions out of the cell. The protein is Probable cobalt/nickel-exporting P-type ATPase (ctpD) of Mycolicibacterium smegmatis (strain ATCC 700084 / mc(2)155) (Mycobacterium smegmatis).